The chain runs to 68 residues: Large ribosomal subunit protein bL33c (68 aa).

Belongs to the bacterial ribosomal protein bL33 family.

The protein resides in the plastid. The polypeptide is Large ribosomal subunit protein bL33c (Cuscuta exaltata (Tall dodder)).